Consider the following 392-residue polypeptide: Formate-dependent phosphoribosylglycinamide formyltransferase (392 aa).

Residues 22–23 (EL) and glutamate 82 each bind N(1)-(5-phospho-beta-D-ribosyl)glycinamide. Residues arginine 114, lysine 155, 160–165 (SSGKGQ), 195–198 (EGVV), and glutamate 203 each bind ATP. Positions 119 to 308 (RLAAEELGLP…EFALHVRAFL (190 aa)) constitute an ATP-grasp domain. Positions 267 and 279 each coordinate Mg(2+). N(1)-(5-phospho-beta-D-ribosyl)glycinamide is bound by residues aspartate 286, lysine 355, and 362-363 (RR).

This sequence belongs to the PurK/PurT family. Homodimer.

It catalyses the reaction N(1)-(5-phospho-beta-D-ribosyl)glycinamide + formate + ATP = N(2)-formyl-N(1)-(5-phospho-beta-D-ribosyl)glycinamide + ADP + phosphate + H(+). Its pathway is purine metabolism; IMP biosynthesis via de novo pathway; N(2)-formyl-N(1)-(5-phospho-D-ribosyl)glycinamide from N(1)-(5-phospho-D-ribosyl)glycinamide (formate route): step 1/1. Involved in the de novo purine biosynthesis. Catalyzes the transfer of formate to 5-phospho-ribosyl-glycinamide (GAR), producing 5-phospho-ribosyl-N-formylglycinamide (FGAR). Formate is provided by PurU via hydrolysis of 10-formyl-tetrahydrofolate. The chain is Formate-dependent phosphoribosylglycinamide formyltransferase from Salmonella paratyphi B (strain ATCC BAA-1250 / SPB7).